Consider the following 201-residue polypeptide: Small ribosomal subunit protein uS4 (201 aa).

The 61-residue stretch at 91–151 (SRLDNVVYRA…EKSQKMNWFE (61 aa)) folds into the S4 RNA-binding domain.

It belongs to the universal ribosomal protein uS4 family. As to quaternary structure, part of the 30S ribosomal subunit. Contacts protein S5. The interaction surface between S4 and S5 is involved in control of translational fidelity.

Its function is as follows. One of the primary rRNA binding proteins, it binds directly to 16S rRNA where it nucleates assembly of the body of the 30S subunit. Functionally, with S5 and S12 plays an important role in translational accuracy. This chain is Small ribosomal subunit protein uS4, found in Corynebacterium glutamicum (strain ATCC 13032 / DSM 20300 / JCM 1318 / BCRC 11384 / CCUG 27702 / LMG 3730 / NBRC 12168 / NCIMB 10025 / NRRL B-2784 / 534).